We begin with the raw amino-acid sequence, 171 residues long: Protein FAM209A (171 aa).

Residues 1 to 19 (MWTLKSSLVLLLCLTCSYA) form the signal peptide. At 20–52 (FMFSSLRQKTSEPQGKVQYGEHFRIRQNLPEHT) the chain is on the extracellular side. Residues 53–73 (QGWLGSKWLWLLFVVVPFVIL) form a helical membrane-spanning segment. Over 74 to 171 (QCQRDSEKNK…CEIWGEESSS (98 aa)) the chain is Cytoplasmic. The tract at residues 81-107 (KNKEQSPPGLRGGQLHSPLKKKRNASP) is disordered. Residues 114–139 (NTLMELEVELMKFVSKVRNLKRAMAT) adopt a coiled-coil conformation.

It belongs to the FAM209 family. As to quaternary structure, interacts with DPY19L2. Interacts with CYLC1; the interaction may be relevant for proper acrosome attachment to the nuclear envelope.

Its subcellular location is the nucleus inner membrane. May play a role in sperm acrosome biogenesis. This Homo sapiens (Human) protein is Protein FAM209A.